We begin with the raw amino-acid sequence, 143 residues long: Putative pre-16S rRNA nuclease (143 aa).

The protein belongs to the YqgF nuclease family.

It localises to the cytoplasm. In terms of biological role, could be a nuclease involved in processing of the 5'-end of pre-16S rRNA. This Marinobacter nauticus (strain ATCC 700491 / DSM 11845 / VT8) (Marinobacter aquaeolei) protein is Putative pre-16S rRNA nuclease.